The following is a 548-amino-acid chain: Polynucleotide 5'-hydroxyl-kinase nol-9 (548 aa).

186-193 lines the ATP pocket; sequence GHKGAGKS.

Belongs to the Clp1 family. NOL9/GRC3 subfamily.

Its subcellular location is the nucleus. It localises to the nucleolus. Functionally, polynucleotide 5'-kinase involved in rRNA processing. In Caenorhabditis briggsae, this protein is Polynucleotide 5'-hydroxyl-kinase nol-9 (nol-9).